A 490-amino-acid polypeptide reads, in one-letter code: GTPase Der (490 aa).

2 consecutive EngA-type G domains span residues 3 to 166 and 203 to 376; these read PVVA…MDDV and IKLA…DSST. GTP-binding positions include 9–16, 56–60, 118–121, 209–216, 256–260, and 321–324; these read GRPNVGKS, DTGGI, NKTD, DTAGV, and NKWD. The KH-like domain occupies 377 to 461; it reads RRVSTAMLTR…PIRIQFKEGE (85 aa).

It belongs to the TRAFAC class TrmE-Era-EngA-EngB-Septin-like GTPase superfamily. EngA (Der) GTPase family. Associates with the 50S ribosomal subunit.

Its function is as follows. GTPase that plays an essential role in the late steps of ribosome biogenesis. This is GTPase Der from Salmonella enteritidis PT4 (strain P125109).